The primary structure comprises 258 residues: Ribosomal RNA large subunit methyltransferase E (258 aa).

S-adenosyl-L-methionine-binding residues include G58, W60, D78, D96, and D120. The active-site Proton acceptor is the K160.

The protein belongs to the class I-like SAM-binding methyltransferase superfamily. RNA methyltransferase RlmE family.

Its subcellular location is the cytoplasm. It catalyses the reaction uridine(2552) in 23S rRNA + S-adenosyl-L-methionine = 2'-O-methyluridine(2552) in 23S rRNA + S-adenosyl-L-homocysteine + H(+). Functionally, specifically methylates the uridine in position 2552 of 23S rRNA at the 2'-O position of the ribose in the fully assembled 50S ribosomal subunit. This is Ribosomal RNA large subunit methyltransferase E from Methanococcus maripaludis (strain DSM 14266 / JCM 13030 / NBRC 101832 / S2 / LL).